The sequence spans 412 residues: Serine hydroxymethyltransferase (412 aa).

(6S)-5,6,7,8-tetrahydrofolate-binding positions include Leu-117 and 121 to 123 (GHL). Lys-226 bears the N6-(pyridoxal phosphate)lysine mark. Glu-241 contributes to the (6S)-5,6,7,8-tetrahydrofolate binding site.

It belongs to the SHMT family. In terms of assembly, homodimer. Requires pyridoxal 5'-phosphate as cofactor.

The protein localises to the cytoplasm. The catalysed reaction is (6R)-5,10-methylene-5,6,7,8-tetrahydrofolate + glycine + H2O = (6S)-5,6,7,8-tetrahydrofolate + L-serine. It participates in one-carbon metabolism; tetrahydrofolate interconversion. It functions in the pathway amino-acid biosynthesis; glycine biosynthesis; glycine from L-serine: step 1/1. In terms of biological role, catalyzes the reversible interconversion of serine and glycine with tetrahydrofolate (THF) serving as the one-carbon carrier. This reaction serves as the major source of one-carbon groups required for the biosynthesis of purines, thymidylate, methionine, and other important biomolecules. Also exhibits THF-independent aldolase activity toward beta-hydroxyamino acids, producing glycine and aldehydes, via a retro-aldol mechanism. The sequence is that of Serine hydroxymethyltransferase from Staphylococcus carnosus (strain TM300).